Here is an 85-residue protein sequence, read N- to C-terminus: Beta-insect depressant toxin BmKITa (85 aa).

The N-terminal stretch at 1–21 (MKLFLLLLISASMLIDGLVNA) is a signal peptide. An LCN-type CS-alpha/beta domain is found at 22–82 (DGYIRGSNGC…TWKSESNTCG (61 aa)). 4 disulfides stabilise this stretch: Cys-31–Cys-81, Cys-35–Cys-56, Cys-42–Cys-63, and Cys-46–Cys-65. Glycine amide is present on Gly-82.

As to expression, expressed by the venom gland.

Its subcellular location is the secreted. Functionally, depressant insect beta-toxins cause a transient contraction paralysis followed by a slow flaccid paralysis. They bind voltage-independently at site-4 of sodium channels (Nav) and shift the voltage of activation toward more negative potentials thereby affecting sodium channel activation and promoting spontaneous and repetitive firing. This toxin also displays an evident analgesic effect but is devoid of any toxicity on mice. The polypeptide is Beta-insect depressant toxin BmKITa (Olivierus martensii (Manchurian scorpion)).